Reading from the N-terminus, the 635-residue chain is Biosynthetic arginine decarboxylase (635 aa).

Position 100 is an N6-(pyridoxal phosphate)lysine (K100). 282 to 292 (LDIGGGLGVDY) is a substrate binding site.

It belongs to the Orn/Lys/Arg decarboxylase class-II family. SpeA subfamily. Mg(2+) serves as cofactor. Pyridoxal 5'-phosphate is required as a cofactor.

The catalysed reaction is L-arginine + H(+) = agmatine + CO2. Its pathway is amine and polyamine biosynthesis; agmatine biosynthesis; agmatine from L-arginine: step 1/1. Its function is as follows. Catalyzes the biosynthesis of agmatine from arginine. This Geotalea uraniireducens (strain Rf4) (Geobacter uraniireducens) protein is Biosynthetic arginine decarboxylase.